The sequence spans 466 residues: Neuraminidase (466 aa).

Topologically, residues 1-8 are intravirion; the sequence is MLPSTVQT. Residues 9 to 31 form a helical membrane-spanning segment; sequence LTLLLTSGGVLLSLYVSASLSYL. The interval 13 to 35 is involved in apical transport and lipid raft association; that stretch reads LTSGGVLLSLYVSASLSYLLYSD. Residues 32–466 lie on the Virion surface side of the membrane; the sequence is LYSDVLLKFS…DTVTGVDMAL (435 aa). The hypervariable stalk region stretch occupies residues 38 to 86; sequence LKFSSTKTTAPTMSLECTNASNAQTVNHSATKEMTFPPPEPEWTYPRLS. N-linked (GlcNAc...) asparagine; by host glycosylation is found at asparagine 56 and asparagine 64. 8 disulfides stabilise this stretch: cysteine 87–cysteine 420, cysteine 122–cysteine 127, cysteine 182–cysteine 229, cysteine 231–cysteine 236, cysteine 277–cysteine 291, cysteine 279–cysteine 289, cysteine 318–cysteine 337, and cysteine 424–cysteine 447. A head of neuraminidase region spans residues 89–466; it reads GSTFQKALLI…DTVTGVDMAL (378 aa). Arginine 116 serves as a coordination point for substrate. Asparagine 144 carries N-linked (GlcNAc...) asparagine; by host glycosylation. Residue aspartate 149 is the Proton donor/acceptor of the active site. Arginine 150 serves as a coordination point for substrate. 275–276 contacts substrate; it reads EE. The N-linked (GlcNAc...) asparagine; by host glycan is linked to asparagine 284. Residue arginine 292 coordinates substrate. Ca(2+) is bound by residues aspartate 293, threonine 297, aspartate 324, and glycine 346. Residue arginine 374 participates in substrate binding. Residue tyrosine 409 is the Nucleophile of the active site.

The protein belongs to the glycosyl hydrolase 34 family. Homotetramer. Ca(2+) serves as cofactor. In terms of processing, N-glycosylated.

The protein resides in the virion membrane. Its subcellular location is the host apical cell membrane. It catalyses the reaction Hydrolysis of alpha-(2-&gt;3)-, alpha-(2-&gt;6)-, alpha-(2-&gt;8)- glycosidic linkages of terminal sialic acid residues in oligosaccharides, glycoproteins, glycolipids, colominic acid and synthetic substrates.. Its activity is regulated as follows. Inhibited by the neuraminidase inhibitors zanamivir (Relenza) and oseltamivir (Tamiflu). These drugs interfere with the release of progeny virus from infected cells and are effective against all influenza strains. Resistance to neuraminidase inhibitors is quite rare. Catalyzes the removal of terminal sialic acid residues from viral and cellular glycoconjugates. Cleaves off the terminal sialic acids on the glycosylated HA during virus budding to facilitate virus release. Additionally helps virus spread through the circulation by further removing sialic acids from the cell surface. These cleavages prevent self-aggregation and ensure the efficient spread of the progeny virus from cell to cell. Otherwise, infection would be limited to one round of replication. Described as a receptor-destroying enzyme because it cleaves a terminal sialic acid from the cellular receptors. May facilitate viral invasion of the upper airways by cleaving the sialic acid moieties on the mucin of the airway epithelial cells. Likely to plays a role in the budding process through its association with lipid rafts during intracellular transport. May additionally display a raft-association independent effect on budding. Plays a role in the determination of host range restriction on replication and virulence. Sialidase activity in late endosome/lysosome traffic seems to enhance virus replication. The protein is Neuraminidase of Influenza B virus (strain B/Lee/1940).